The sequence spans 419 residues: Satellite RNA 48 kDa protein (419 aa).

Basic residues predominate over residues 1 to 27 (MQKTMTRHLSRNRKPHEKVSHVPRRGP). The tract at residues 1–66 (MQKTMTRHLS…SLGRKPYNPG (66 aa)) is disordered.

It belongs to the nepovirus satellite RNA 48 kDa protein family.

The sequence is that of Satellite RNA 48 kDa protein from Allium porrum (Leek).